The sequence spans 97 residues: Large ribosomal subunit protein uL23 (97 aa).

The protein belongs to the universal ribosomal protein uL23 family. In terms of assembly, part of the 50S ribosomal subunit. Contacts protein L29, and trigger factor when it is bound to the ribosome.

Its function is as follows. One of the early assembly proteins it binds 23S rRNA. One of the proteins that surrounds the polypeptide exit tunnel on the outside of the ribosome. Forms the main docking site for trigger factor binding to the ribosome. The polypeptide is Large ribosomal subunit protein uL23 (Limosilactobacillus fermentum (strain NBRC 3956 / LMG 18251) (Lactobacillus fermentum)).